The chain runs to 296 residues: Ribosomal protein L11 methyltransferase (296 aa).

4 residues coordinate S-adenosyl-L-methionine: threonine 147, glycine 168, aspartate 190, and asparagine 232.

This sequence belongs to the methyltransferase superfamily. PrmA family.

The protein localises to the cytoplasm. It carries out the reaction L-lysyl-[protein] + 3 S-adenosyl-L-methionine = N(6),N(6),N(6)-trimethyl-L-lysyl-[protein] + 3 S-adenosyl-L-homocysteine + 3 H(+). Its function is as follows. Methylates ribosomal protein L11. The sequence is that of Ribosomal protein L11 methyltransferase from Marinomonas sp. (strain MWYL1).